Reading from the N-terminus, the 245-residue chain is Adenosylcobinamide-GDP ribazoletransferase (245 aa).

The next 6 helical transmembrane spans lie at 35-55, 108-128, 137-157, 176-196, 197-217, and 222-242; these read WFPL…ALGL, IGAF…IGAH, GVLI…AALV, IAIG…TPVM, TTVT…HLAR, and INGD…LLAA.

Belongs to the CobS family. Requires Mg(2+) as cofactor.

The protein resides in the cell inner membrane. It carries out the reaction alpha-ribazole + adenosylcob(III)inamide-GDP = adenosylcob(III)alamin + GMP + H(+). It catalyses the reaction alpha-ribazole 5'-phosphate + adenosylcob(III)inamide-GDP = adenosylcob(III)alamin 5'-phosphate + GMP + H(+). It functions in the pathway cofactor biosynthesis; adenosylcobalamin biosynthesis; adenosylcobalamin from cob(II)yrinate a,c-diamide: step 7/7. Joins adenosylcobinamide-GDP and alpha-ribazole to generate adenosylcobalamin (Ado-cobalamin). Also synthesizes adenosylcobalamin 5'-phosphate from adenosylcobinamide-GDP and alpha-ribazole 5'-phosphate. The sequence is that of Adenosylcobinamide-GDP ribazoletransferase from Nitratidesulfovibrio vulgaris (strain DP4) (Desulfovibrio vulgaris).